Consider the following 307-residue polypeptide: B3 domain-containing protein At5g18000 (307 aa).

A DNA-binding region (TF-B3 1) is located at residues 20–115 (FFKILRREDH…CFNVTIFEAD (96 aa)). Disordered regions lie at residues 122–141 (PRKT…RKSI) and 151–209 (IESW…SEAG). A compositionally biased stretch (polar residues) spans 166 to 177 (ESTSGRLTQKQE). A compositionally biased stretch (basic and acidic residues) spans 178–192 (LNLRKKEADKTEKSK). Positions 214–307 (IPEFKLTIKK…TEMRVKVSKE (94 aa)) form a DNA-binding region, TF-B3 2.

The protein localises to the nucleus. The chain is B3 domain-containing protein At5g18000 from Arabidopsis thaliana (Mouse-ear cress).